The following is a 122-amino-acid chain: Large ribosomal subunit protein uL14 (122 aa).

The protein belongs to the universal ribosomal protein uL14 family. As to quaternary structure, part of the 50S ribosomal subunit. Forms a cluster with proteins L3 and L19. In the 70S ribosome, L14 and L19 interact and together make contacts with the 16S rRNA in bridges B5 and B8.

Binds to 23S rRNA. Forms part of two intersubunit bridges in the 70S ribosome. This Kocuria rhizophila (strain ATCC 9341 / DSM 348 / NBRC 103217 / DC2201) protein is Large ribosomal subunit protein uL14.